A 415-amino-acid polypeptide reads, in one-letter code: Multidrug resistance protein MdtA (415 aa).

The signal sequence occupies residues 1–21; that stretch reads MKGSYKSRWVIVIVVVIAAIA. The span at 31 to 46 shows a compositional bias: polar residues; sequence DSQSAAPGATKQAQQS. 2 disordered regions span residues 31-56 and 391-415; these read DSQSAAPGATKQAQQSPAGGRRGMRA and VEAQSTTTPEEKATSREYAKKGARS. Residues 399–415 show a composition bias toward basic and acidic residues; it reads PEEKATSREYAKKGARS.

The protein belongs to the membrane fusion protein (MFP) (TC 8.A.1) family. As to quaternary structure, part of a tripartite efflux system composed of MdtA, MdtB and MdtC.

The protein localises to the cell inner membrane. Functionally, the MdtABC tripartite complex confers resistance against novobiocin and deoxycholate. The sequence is that of Multidrug resistance protein MdtA from Escherichia coli O45:K1 (strain S88 / ExPEC).